The following is a 158-amino-acid chain: S-ribosylhomocysteine lyase (158 aa).

Fe cation contacts are provided by His-54, His-58, and Cys-124.

Belongs to the LuxS family. In terms of assembly, homodimer. The cofactor is Fe cation.

The catalysed reaction is S-(5-deoxy-D-ribos-5-yl)-L-homocysteine = (S)-4,5-dihydroxypentane-2,3-dione + L-homocysteine. Its function is as follows. Involved in the synthesis of autoinducer 2 (AI-2) which is secreted by bacteria and is used to communicate both the cell density and the metabolic potential of the environment. The regulation of gene expression in response to changes in cell density is called quorum sensing. Catalyzes the transformation of S-ribosylhomocysteine (RHC) to homocysteine (HC) and 4,5-dihydroxy-2,3-pentadione (DPD). The polypeptide is S-ribosylhomocysteine lyase (Limosilactobacillus reuteri (Lactobacillus reuteri)).